Consider the following 523-residue polypeptide: Asparagine--tRNA ligase (523 aa).

Residues 329 to 350 (SARGDTPLAARSTARTPPVRTP) form a disordered region.

This sequence belongs to the class-II aminoacyl-tRNA synthetase family. As to quaternary structure, homodimer.

The protein localises to the cytoplasm. It catalyses the reaction tRNA(Asn) + L-asparagine + ATP = L-asparaginyl-tRNA(Asn) + AMP + diphosphate + H(+). In Treponema pallidum (strain Nichols), this protein is Asparagine--tRNA ligase.